The sequence spans 421 residues: Gamma-glutamyl phosphate reductase (421 aa).

This sequence belongs to the gamma-glutamyl phosphate reductase family.

It localises to the cytoplasm. The catalysed reaction is L-glutamate 5-semialdehyde + phosphate + NADP(+) = L-glutamyl 5-phosphate + NADPH + H(+). Its pathway is amino-acid biosynthesis; L-proline biosynthesis; L-glutamate 5-semialdehyde from L-glutamate: step 2/2. Its function is as follows. Catalyzes the NADPH-dependent reduction of L-glutamate 5-phosphate into L-glutamate 5-semialdehyde and phosphate. The product spontaneously undergoes cyclization to form 1-pyrroline-5-carboxylate. This Pseudomonas fluorescens (strain SBW25) protein is Gamma-glutamyl phosphate reductase.